Here is a 170-residue protein sequence, read N- to C-terminus: Arginine repressor (170 aa).

Belongs to the ArgR family.

It is found in the cytoplasm. The protein operates within amino-acid biosynthesis; L-arginine biosynthesis [regulation]. Regulates arginine biosynthesis genes. The protein is Arginine repressor of Bifidobacterium longum (strain NCC 2705).